Consider the following 780-residue polypeptide: Pendrin (780 aa).

Residues 1–87 (MAARGGRSEP…YRVKEWLLSD (87 aa)) lie on the Cytoplasmic side of the membrane. The helical transmembrane segment at 88-108 (IISGVSTGLVGTLQGMAYALL) threads the bilayer. Residue Ala-109 is a topological domain, extracellular. The helical transmembrane segment at 110-130 (AVPVQFGLYSAFFPILTYFVF) threads the bilayer. The Cytoplasmic portion of the chain corresponds to 131-135 (GTSRH). Residues 136-156 (ISVGPFPVVSLMVGSVVLSMA) form a helical membrane-spanning segment. Over 157-191 (PDDHFLVPSGNGSALNSTTLDTGTRDAARVLLAST) the chain is Extracellular. Residues 192–212 (LTLLVGIIQLVFGGLQIGFIV) traverse the membrane as a helical segment. Topologically, residues 213–218 (RYLADP) are cytoplasmic. Residues 219-239 (LVGGFTTAAAFQVLVSQLKIV) traverse the membrane as a helical segment. Residues 240–263 (LNVSTKNYNGILSIIYTLIEIFQN) lie on the Extracellular side of the membrane. Residues 264–284 (IGDTNIADFIAGLLTIIVCMA) form a helical membrane-spanning segment. Residues 285–295 (VKELNDRFKHR) lie on the Cytoplasmic side of the membrane. Residues 296–316 (IPVPIPIEVIVTIIATAISYG) traverse the membrane as a helical segment. Over 317 to 344 (ANLEKNYNAGIVKSIPSGFLPPVLPSVG) the chain is Extracellular. A helical transmembrane segment spans residues 345–365 (LFSDMLAASFSIAVVAYAIAV). Over 366–384 (SVGKVYATKHDYVIDGNQE) the chain is Cytoplasmic. The chain crosses the membrane as a helical span at residues 385–405 (FIAFGISNVFSGFFSCFVATT). The Extracellular segment spans residues 406 to 421 (ALSRTAVQESTGGKTQ). The chain crosses the membrane as a helical span at residues 422–442 (VAGLISAVIVMVAIVALGRLL). Over 443 to 448 (EPLQKS) the chain is Cytoplasmic. Residues 449–469 (VLAAVVIANLKGMFMQVCDVP) form a helical membrane-spanning segment. Topologically, residues 470-486 (RLWKQNKTDAVIWVFTC) are extracellular. The helical transmembrane segment at 487–507 (IMSIILGLDLGLLAGLLFALL) threads the bilayer. At 508 to 780 (TVVLRVQFPS…QDEAMRRLAS (273 aa)) the chain is on the cytoplasmic side. Positions 535–729 (HYKNLEEPEG…LTVHDAILHL (195 aa)) constitute an STAS domain.

It belongs to the SLC26A/SulP transporter (TC 2.A.53) family. In terms of assembly, interacts with IQGAP1. This interaction enhances the chloride-bicarbonate exchange activity of SLC26A4. In terms of tissue distribution, highly expressed in the kidney (at protein level). Throughout the endolymphatic duct and sac, in distinct areas of the utricle and saccule, and in the external sulcus region within the cochlea. Expressed in the parotid gland.

Its subcellular location is the apical cell membrane. It localises to the cell membrane. The catalysed reaction is chloride(in) = chloride(out). It catalyses the reaction iodide(out) = iodide(in). The enzyme catalyses hydrogencarbonate(in) + chloride(out) = hydrogencarbonate(out) + chloride(in). It carries out the reaction iodide(in) + hydrogencarbonate(out) = iodide(out) + hydrogencarbonate(in). The catalysed reaction is iodide(in) + chloride(out) = iodide(out) + chloride(in). It catalyses the reaction formate(in) + chloride(out) = formate(out) + chloride(in). Sodium-independent transporter of chloride and iodide. Mediates electroneutral iodide-chloride, iodide-bicarbonate and chloride-bicarbonate exchange with 1:1 stoichiometry. Mediates elctroneutral chloride-formate exchange. The polypeptide is Pendrin (Slc26a4) (Mus musculus (Mouse)).